A 261-amino-acid chain; its full sequence is Ribonuclease HII (261 aa).

An RNase H type-2 domain is found at Lys-71–Ser-259. 3 residues coordinate a divalent metal cation: Asp-77, Glu-78, and Asp-169.

It belongs to the RNase HII family. Mn(2+) serves as cofactor. The cofactor is Mg(2+).

It is found in the cytoplasm. It catalyses the reaction Endonucleolytic cleavage to 5'-phosphomonoester.. Functionally, endonuclease that specifically degrades the RNA of RNA-DNA hybrids. This is Ribonuclease HII from Listeria monocytogenes serotype 4b (strain F2365).